A 429-amino-acid chain; its full sequence is ETS domain-containing protein Elk-1 (429 aa).

The ETS DNA-binding region spans 5–86 (VTLWQFLLQL…SGQKFVYKFV (82 aa)). 3 disordered regions span residues 119–146 (HAGP…GLAR), 165–204 (SLQP…SPNP), and 227–253 (APNQ…KVEG). The span at 169–178 (QPQPPIPPRP) shows a compositional bias: pro residues. Glycyl lysine isopeptide (Lys-Gly) (interchain with G-Cter in SUMO) cross-links involve residues Lys-231, Lys-250, and Lys-255. A compositionally biased stretch (polar residues) spans 302–312 (STSTTEITQPQ). The interval 302–354 (STSTTEITQPQKGRKPRDLELPLSPSLLGGQGPERTPGSGTSSGLQAPGPALT) is disordered. The residue at position 325 (Ser-325) is a Phosphoserine; by MAPK1. Residues Thr-337, Thr-354, Thr-364, and Thr-369 each carry the phosphothreonine; by MAPK1 modification. A sufficient for interaction with MAD2L2 region spans residues 350-400 (GPALTPSLLPTHTLTPVLLTPSSLPPSIHFWSTLSPIAPRSPAKLSFQFPS). A glycan (O-linked (GlcNAc) threonine) is linked at Thr-382. Phosphoserine; by MAPK1 and MAPK8 is present on Ser-384. Ser-390 carries the phosphoserine; by MAPK1 modification. Thr-418 is subject to Phosphothreonine; by MAPK1. The residue at position 423 (Ser-423) is a Phosphoserine; by MAPK1.

Belongs to the ETS family. In terms of assembly, interacts in its sumoylated form with PIAS2/PIASX which enhances its transcriptional activator activity. Interacts with MAD2L2; the interaction is direct and promotes phosphorylation by the kinases MAPK8 and/or MAPK9. Interacts with POU1F1. Sumoylation represses transcriptional activator activity as it results in recruitment of HDAC2 to target gene promoters which leads to decreased histone acetylation and reduced transactivator activity. It also regulates nuclear retention. Post-translationally, on mitogenic stimulation, phosphorylated on C-terminal serine and threonine residues by MAPK1 but also MAPK8 and/or MAPK9. Phosphorylation leads to loss of sumoylation and restores transcriptional activator activity. Phosphorylated and activated by CaMK4, MAPK11, MAPK12 and MAPK14. Upon bFGF stimulus, phosphorylated by PAK1. Phosphorylated by PRP4K at Thr-418; phosphorylation activation ELK1 transcriptional activity. Predominantly expressed in the brain, and to a lesser extent in the heart, liver and muscle.

It is found in the nucleus. Transcription factor that binds to purine-rich DNA sequences. Forms a ternary complex with SRF and the ETS and SRF motifs of the serum response element (SRE) on the promoter region of immediate early genes such as FOS and IER2. Induces target gene transcription upon JNK and MAPK-signaling pathways stimulation. The chain is ETS domain-containing protein Elk-1 from Mus musculus (Mouse).